The sequence spans 431 residues: Enolase (431 aa).

Q163 is a binding site for (2R)-2-phosphoglycerate. Residue E205 is the Proton donor of the active site. Positions 242, 288, and 315 each coordinate Mg(2+). (2R)-2-phosphoglycerate-binding residues include K340, R369, S370, and K391. Residue K340 is the Proton acceptor of the active site.

It belongs to the enolase family. Mg(2+) is required as a cofactor.

It localises to the cytoplasm. Its subcellular location is the secreted. The protein resides in the cell surface. The enzyme catalyses (2R)-2-phosphoglycerate = phosphoenolpyruvate + H2O. It participates in carbohydrate degradation; glycolysis; pyruvate from D-glyceraldehyde 3-phosphate: step 4/5. Functionally, catalyzes the reversible conversion of 2-phosphoglycerate (2-PG) into phosphoenolpyruvate (PEP). It is essential for the degradation of carbohydrates via glycolysis. In Latilactobacillus sakei subsp. sakei (strain 23K) (Lactobacillus sakei subsp. sakei), this protein is Enolase.